Consider the following 1199-residue polypeptide: Ecdysone-induced protein 75B, isoforms C/D (1199 aa).

A disordered region spans residues 130 to 182 (TTDGPTAVLQQQQPQQQMPQHFESLPHHHPQQEHQPQQQQQQHHLQHHPHPHV). Composition is skewed to low complexity over residues 139 to 149 (QQQQPQQQMPQ) and 162 to 172 (EHQPQQQQQQH). Residues 242–318 (TVLCRVCGDK…VGMSRDAVRF (77 aa)) constitute a DNA-binding region (nuclear receptor). 2 NR C4-type zinc fingers span residues 245–265 (CRVCGDKASGFHYGVHSCEGC) and 282–306 (CTKNQQCSILRINRNRCQYCRLKKC). One can recognise an NR LBD domain in the interval 352–600 (DQPRLLAAVL…QQMWSMEDGN (249 aa)). 6 disordered regions span residues 624–665 (KSPL…SALA), 771–808 (LDSPTDSGIESGNEKNECKAVSSGGSSSCSSPRSSVDD), 831–851 (VSVSPVRSPQPSTSSHLKRQI), 895–961 (AEAD…SSHS), 991–1104 (ENST…SNSA), and 1155–1188 (VTVTASNGGPPSAAASPAPSSSPPASVGSPNPGL). Low complexity-rich tracts occupy residues 641–653 (GSPSSSQPQGVSL), 792–804 (SSGGSSSCSSPRS), 831–845 (VSVSPVRSPQPSTSS), 897–942 (ADAS…AQSQ), and 950–961 (SSPKASMASSHS). 2 stretches are compositionally biased toward polar residues: residues 993–1006 (STAASSTTNGVGNR) and 1018–1040 (AVQNQQRWGSSSVITTTCQQRQQ). Low complexity-rich tracts occupy residues 1041-1077 (SVSPHSNGSSSSSSSSSSSSSSSSSTSSNCSSSSASS), 1086-1104 (STSNGTSAPASSSSGSNSA), and 1159-1187 (ASNGGPPSAAASPAPSSSPPASVGSPNPG).

This sequence belongs to the nuclear hormone receptor family. NR1 subfamily.

It is found in the nucleus. Functionally, implicated in the regulation of ecdysone-triggered gene hierarchies. Probably plays a key role in mediating the regulation of the larval molt by 20-OH-ecdysone. The chain is Ecdysone-induced protein 75B, isoforms C/D (Eip75B) from Drosophila melanogaster (Fruit fly).